Consider the following 93-residue polypeptide: Exodeoxyribonuclease 7 small subunit (93 aa).

Residues 61–75 (IDDNGDEKVYEKQTD) are compositionally biased toward basic and acidic residues. The interval 61–93 (IDDNGDEKVYEKQTDDPSNNGGGNRGFGSADEQ) is disordered.

This sequence belongs to the XseB family. Heterooligomer composed of large and small subunits.

It localises to the cytoplasm. It catalyses the reaction Exonucleolytic cleavage in either 5'- to 3'- or 3'- to 5'-direction to yield nucleoside 5'-phosphates.. Functionally, bidirectionally degrades single-stranded DNA into large acid-insoluble oligonucleotides, which are then degraded further into small acid-soluble oligonucleotides. The protein is Exodeoxyribonuclease 7 small subunit of Limosilactobacillus reuteri (strain DSM 20016) (Lactobacillus reuteri).